Consider the following 372-residue polypeptide: 4-hydroxy-3-methylbut-2-en-1-yl diphosphate synthase (flavodoxin) (372 aa).

Residues C270, C273, C305, and E312 each coordinate [4Fe-4S] cluster.

It belongs to the IspG family. Requires [4Fe-4S] cluster as cofactor.

The catalysed reaction is (2E)-4-hydroxy-3-methylbut-2-enyl diphosphate + oxidized [flavodoxin] + H2O + 2 H(+) = 2-C-methyl-D-erythritol 2,4-cyclic diphosphate + reduced [flavodoxin]. Its pathway is isoprenoid biosynthesis; isopentenyl diphosphate biosynthesis via DXP pathway; isopentenyl diphosphate from 1-deoxy-D-xylulose 5-phosphate: step 5/6. In terms of biological role, converts 2C-methyl-D-erythritol 2,4-cyclodiphosphate (ME-2,4cPP) into 1-hydroxy-2-methyl-2-(E)-butenyl 4-diphosphate. This is 4-hydroxy-3-methylbut-2-en-1-yl diphosphate synthase (flavodoxin) from Shewanella amazonensis (strain ATCC BAA-1098 / SB2B).